Reading from the N-terminus, the 299-residue chain is Protease HtpX homolog (299 aa).

The next 2 membrane-spanning stretches (helical) occupy residues 14-34 (WLLL…VGNL) and 39-59 (GFGG…TMIF). His-143 is a Zn(2+) binding site. The active site involves Glu-144. His-147 lines the Zn(2+) pocket. The next 2 helical transmembrane spans lie at 153–173 (IRIS…AGMA) and 198–218 (IVFL…ATLV). Glu-227 is a binding site for Zn(2+).

It belongs to the peptidase M48B family. Zn(2+) is required as a cofactor.

Its subcellular location is the cell membrane. This Streptococcus thermophilus (strain ATCC BAA-250 / LMG 18311) protein is Protease HtpX homolog.